The following is a 306-amino-acid chain: Pantothenate kinase (306 aa).

90–97 provides a ligand contact to ATP; that stretch reads GSVAVGKS.

The protein belongs to the prokaryotic pantothenate kinase family.

It localises to the cytoplasm. The catalysed reaction is (R)-pantothenate + ATP = (R)-4'-phosphopantothenate + ADP + H(+). The protein operates within cofactor biosynthesis; coenzyme A biosynthesis; CoA from (R)-pantothenate: step 1/5. The protein is Pantothenate kinase of Listeria monocytogenes serotype 4b (strain CLIP80459).